Reading from the N-terminus, the 182-residue chain is Phospholipase A2 inhibitor gamma subunit A (182 aa).

8 disulfides stabilise this stretch: Cys3–Cys27, Cys6–Cys13, Cys20–Cys48, Cys54–Cys75, Cys76–Cys81, Cys99–Cys124, Cys117–Cys146, and Cys150–Cys172. Asn157 carries an N-linked (GlcNAc...) asparagine glycan.

This sequence belongs to the CNF-like-inhibitor family. In terms of assembly, heterotrimer of 2 subunits A and 1 subunit B. In terms of processing, N-glycosylation is not important for activity, since deglycosylation does not change its PLA2 inhibitory activity. As to expression, expressed by the liver.

It localises to the secreted. In terms of biological role, strongly inhibits its own venom PLA2 and all other PLA2s tested including Elapid, Crotalid and Viperid venom PLA2s, as well as honeybee PLA2s. This is Phospholipase A2 inhibitor gamma subunit A from Laticauda semifasciata (Black-banded sea krait).